The sequence spans 151 residues: NADPH-dependent 7-cyano-7-deazaguanine reductase (151 aa).

The Thioimide intermediate role is filled by C51. D58 functions as the Proton donor in the catalytic mechanism. Residues 73 to 75 and 92 to 93 contribute to the substrate site; these read VES and HE.

Belongs to the GTP cyclohydrolase I family. QueF type 1 subfamily.

It localises to the cytoplasm. The enzyme catalyses 7-aminomethyl-7-carbaguanine + 2 NADP(+) = 7-cyano-7-deazaguanine + 2 NADPH + 3 H(+). The protein operates within tRNA modification; tRNA-queuosine biosynthesis. Its function is as follows. Catalyzes the NADPH-dependent reduction of 7-cyano-7-deazaguanine (preQ0) to 7-aminomethyl-7-deazaguanine (preQ1). The polypeptide is NADPH-dependent 7-cyano-7-deazaguanine reductase (Bacteroides fragilis (strain YCH46)).